The chain runs to 494 residues: Guanosine-5'-triphosphate,3'-diphosphate pyrophosphatase (494 aa).

This sequence belongs to the GppA/Ppx family. GppA subfamily.

The catalysed reaction is guanosine 3'-diphosphate 5'-triphosphate + H2O = guanosine 3',5'-bis(diphosphate) + phosphate + H(+). Its pathway is purine metabolism; ppGpp biosynthesis; ppGpp from GTP: step 2/2. Its function is as follows. Catalyzes the conversion of pppGpp to ppGpp. Guanosine pentaphosphate (pppGpp) is a cytoplasmic signaling molecule which together with ppGpp controls the 'stringent response', an adaptive process that allows bacteria to respond to amino acid starvation, resulting in the coordinated regulation of numerous cellular activities. The chain is Guanosine-5'-triphosphate,3'-diphosphate pyrophosphatase from Erwinia tasmaniensis (strain DSM 17950 / CFBP 7177 / CIP 109463 / NCPPB 4357 / Et1/99).